We begin with the raw amino-acid sequence, 222 residues long: Noggin (222 aa).

The first 19 residues, 1 to 19 (MDHSQCLVTIYALMVFLGL), serve as a signal peptide directing secretion. The N-linked (GlcNAc...) asparagine glycan is linked to asparagine 61. Cystine bridges form between cysteine 145-cysteine 182, cysteine 168-cysteine 218, cysteine 174-cysteine 220, and cysteine 197-cysteine 205.

It belongs to the noggin family. Homodimer.

The protein resides in the secreted. Patterns the embryo by interrupting bone morphogenetic proteins (BMP) signaling. Binds BMP-4 and BMP-2 with high affinity. Can abolish BMP-4 activity by blocking binding to cognate cell-surface receptors. Capable of inducing dorsal development in embryos. Causes dorsal mesodermal differentiation of animal cap ectoderm when coexpressed with xWNT-8 and nuclear, sequence-specific DNA-binding protein xBRA. None of these molecules causes dorsal mesoderm formation when expressed alone. The polypeptide is Noggin (nog) (Xenopus laevis (African clawed frog)).